Here is a 68-residue protein sequence, read N- to C-terminus: Putative protein YfaH (68 aa).

This Escherichia coli (strain K12) protein is Putative protein YfaH (yfaH).